A 42-amino-acid polypeptide reads, in one-letter code: Potassium channel toxin gamma-KTx 3.4 (42 aa).

Intrachain disulfides connect C5–C23, C11–C34, C20–C39, and C24–C41.

The protein belongs to the ergtoxin family. Gamma-KTx 3 subfamily. In terms of tissue distribution, expressed by the venom gland.

Its subcellular location is the secreted. In terms of biological role, blocks Kv11/ERG potassium channels. This chain is Potassium channel toxin gamma-KTx 3.4, found in Centruroides gracilis (Slenderbrown scorpion).